The sequence spans 267 residues: Phosphatidylserine decarboxylase proenzyme (267 aa).

Residues Asp78, His132, and Ser236 each act as charge relay system; for autoendoproteolytic cleavage activity in the active site. Catalysis depends on Ser236, which acts as the Schiff-base intermediate with substrate; via pyruvic acid; for decarboxylase activity. Ser236 carries the pyruvic acid (Ser); by autocatalysis modification.

It belongs to the phosphatidylserine decarboxylase family. PSD-B subfamily. Prokaryotic type I sub-subfamily. Heterodimer of a large membrane-associated beta subunit and a small pyruvoyl-containing alpha subunit. Requires pyruvate as cofactor. Post-translationally, is synthesized initially as an inactive proenzyme. Formation of the active enzyme involves a self-maturation process in which the active site pyruvoyl group is generated from an internal serine residue via an autocatalytic post-translational modification. Two non-identical subunits are generated from the proenzyme in this reaction, and the pyruvate is formed at the N-terminus of the alpha chain, which is derived from the carboxyl end of the proenzyme. The autoendoproteolytic cleavage occurs by a canonical serine protease mechanism, in which the side chain hydroxyl group of the serine supplies its oxygen atom to form the C-terminus of the beta chain, while the remainder of the serine residue undergoes an oxidative deamination to produce ammonia and the pyruvoyl prosthetic group on the alpha chain. During this reaction, the Ser that is part of the protease active site of the proenzyme becomes the pyruvoyl prosthetic group, which constitutes an essential element of the active site of the mature decarboxylase.

Its subcellular location is the cell membrane. It catalyses the reaction a 1,2-diacyl-sn-glycero-3-phospho-L-serine + H(+) = a 1,2-diacyl-sn-glycero-3-phosphoethanolamine + CO2. It functions in the pathway phospholipid metabolism; phosphatidylethanolamine biosynthesis; phosphatidylethanolamine from CDP-diacylglycerol: step 2/2. Functionally, catalyzes the formation of phosphatidylethanolamine (PtdEtn) from phosphatidylserine (PtdSer). The chain is Phosphatidylserine decarboxylase proenzyme from Helicobacter pylori (strain Shi470).